A 66-amino-acid chain; its full sequence is Large ribosomal subunit protein bL32 (66 aa).

It belongs to the bacterial ribosomal protein bL32 family.

The sequence is that of Large ribosomal subunit protein bL32 from Acetivibrio thermocellus (strain ATCC 27405 / DSM 1237 / JCM 9322 / NBRC 103400 / NCIMB 10682 / NRRL B-4536 / VPI 7372) (Clostridium thermocellum).